We begin with the raw amino-acid sequence, 102 residues long: Integration host factor subunit alpha (102 aa).

The tract at residues 49–71 (FGNFQLRTKPQRPGRNPKTGEEI) is disordered.

This sequence belongs to the bacterial histone-like protein family. As to quaternary structure, heterodimer of an alpha and a beta chain.

Functionally, this protein is one of the two subunits of integration host factor, a specific DNA-binding protein that functions in genetic recombination as well as in transcriptional and translational control. The chain is Integration host factor subunit alpha from Nitrosomonas eutropha (strain DSM 101675 / C91 / Nm57).